Reading from the N-terminus, the 447-residue chain is GTPase Der (447 aa).

EngA-type G domains follow at residues 3–167 (PVIA…QLPE) and 180–353 (IRLA…KAAT). GTP is bound by residues 9 to 16 (GRPNVGKS), 56 to 60 (DTGGF), 119 to 122 (NKAE), 186 to 193 (GRPNVGKS), 233 to 237 (DTAGL), and 298 to 301 (NKWD). In terms of domain architecture, KH-like spans 353 to 438 (TCKMPTPVLT…PLRIEMKTSR (86 aa)).

It belongs to the TRAFAC class TrmE-Era-EngA-EngB-Septin-like GTPase superfamily. EngA (Der) GTPase family. As to quaternary structure, associates with the 50S ribosomal subunit.

In terms of biological role, GTPase that plays an essential role in the late steps of ribosome biogenesis. The protein is GTPase Der of Paracidovorax citrulli (strain AAC00-1) (Acidovorax citrulli).